Here is a 396-residue protein sequence, read N- to C-terminus: Elongation factor Tu 2 (396 aa).

The tr-type G domain maps to K10–E206. A G1 region spans residues G19–T26. G19–T26 lines the GTP pocket. Mg(2+) is bound at residue T26. The interval G60 to N64 is G2. The G3 stretch occupies residues D81–G84. Residues D81–H85 and N136–D139 contribute to the GTP site. The segment at N136 to D139 is G4. The tract at residues S174–L176 is G5.

This sequence belongs to the TRAFAC class translation factor GTPase superfamily. Classic translation factor GTPase family. EF-Tu/EF-1A subfamily. Monomer.

The protein localises to the cytoplasm. It carries out the reaction GTP + H2O = GDP + phosphate + H(+). Functionally, GTP hydrolase that promotes the GTP-dependent binding of aminoacyl-tRNA to the A-site of ribosomes during protein biosynthesis. The polypeptide is Elongation factor Tu 2 (Psychrobacter sp. (strain PRwf-1)).